The chain runs to 514 residues: Peptide chain release factor 3 (514 aa).

The region spanning 8–268 is the tr-type G domain; that stretch reads KKRRTFAIIS…TFLEFAPEPH (261 aa). Residues 17 to 24, 85 to 89, and 139 to 142 contribute to the GTP site; these read SHPDAGKT, DTPGH, and NKLD.

It belongs to the TRAFAC class translation factor GTPase superfamily. Classic translation factor GTPase family. PrfC subfamily.

The protein resides in the cytoplasm. In terms of biological role, increases the formation of ribosomal termination complexes and stimulates activities of RF-1 and RF-2. It binds guanine nucleotides and has strong preference for UGA stop codons. It may interact directly with the ribosome. The stimulation of RF-1 and RF-2 is significantly reduced by GTP and GDP, but not by GMP. This is Peptide chain release factor 3 from Streptococcus uberis (strain ATCC BAA-854 / 0140J).